Here is a 249-residue protein sequence, read N- to C-terminus: Chitooligosaccharide deacetylase (249 aa).

The Mg(2+) site is built by His61 and His125.

It belongs to the YdjC deacetylase family. ChbG subfamily. As to quaternary structure, homodimer. Requires Mg(2+) as cofactor.

It is found in the cytoplasm. It carries out the reaction N,N'-diacetylchitobiose + H2O = N-acetyl-beta-D-glucosaminyl-(1-&gt;4)-D-glucosamine + acetate. The enzyme catalyses diacetylchitobiose-6'-phosphate + H2O = N'-monoacetylchitobiose-6'-phosphate + acetate. The protein operates within glycan degradation; chitin degradation. Involved in the degradation of chitin. ChbG is essential for growth on the acetylated chitooligosaccharides chitobiose and chitotriose but is dispensable for growth on cellobiose and chitosan dimer, the deacetylated form of chitobiose. Deacetylation of chitobiose-6-P and chitotriose-6-P is necessary for both the activation of the chb promoter by the regulatory protein ChbR and the hydrolysis of phosphorylated beta-glucosides by the phospho-beta-glucosidase ChbF. Catalyzes the removal of only one acetyl group from chitobiose-6-P to yield monoacetylchitobiose-6-P, the inducer of ChbR and the substrate of ChbF. This is Chitooligosaccharide deacetylase from Escherichia coli O17:K52:H18 (strain UMN026 / ExPEC).